A 621-amino-acid chain; its full sequence is Probable serine/threonine-protein kinase WNK2 (621 aa).

In terms of domain architecture, Protein kinase spans 28–286; that stretch reads GRYTEVLGKG…AQELLMDPFL (259 aa). Residues 108–111 and Lys-158 each bind ATP; that span reads TEVF. The active-site Proton acceptor is Asp-175. Disordered regions lie at residues 438 to 490, 501 to 520, 527 to 553, and 600 to 621; these read SVEN…SDSP, VEPHIGGNMPNGILKKNDTD, GTSVDLPNPSMIDRKSGVASVSTSPQS, and HREETLTRCRLKADERNRSDKP.

It belongs to the protein kinase superfamily. Ser/Thr protein kinase family. WNK subfamily.

It catalyses the reaction L-seryl-[protein] + ATP = O-phospho-L-seryl-[protein] + ADP + H(+). The catalysed reaction is L-threonyl-[protein] + ATP = O-phospho-L-threonyl-[protein] + ADP + H(+). This Oryza sativa subsp. japonica (Rice) protein is Probable serine/threonine-protein kinase WNK2 (WNK2).